We begin with the raw amino-acid sequence, 319 residues long: Iron-sulfur cluster transfer protein NUBPL (319 aa).

A mitochondrion-targeting transit peptide spans 1–38; sequence MGTWRRLLLFGGVSLRGGGAATVPPRGCRALGCGRQLL. An ATP-binding site is contributed by 75–82; the sequence is GKGGVGKS.

This sequence belongs to the Mrp/NBP35 ATP-binding proteins family. The cofactor is [4Fe-4S] cluster.

The protein resides in the mitochondrion. In terms of biological role, iron-sulfur cluster transfer protein involved in the assembly of the mitochondrial membrane respiratory chain NADH dehydrogenase (Complex I). May deliver one or more Fe-S clusters to complex I subunits. This chain is Iron-sulfur cluster transfer protein NUBPL (Nubpl), found in Mus musculus (Mouse).